The chain runs to 331 residues: Olfactory receptor 10S1 (331 aa).

At 1–38 (MTSRSVCEKMTMTTENPNQTVVSHFFLEGLRYTAKHSS) the chain is on the extracellular side. An N-linked (GlcNAc...) asparagine glycan is attached at Asn18. A helical membrane pass occupies residues 39 to 59 (LFFLLFLLIYSITVAGNLLIL). At 60 to 67 (LTVGSDSH) the chain is on the cytoplasmic side. A helical transmembrane segment spans residues 68 to 88 (LSLPMYHFLGHLSFLDACLST). The Extracellular segment spans residues 89–113 (VTVPKVMAGLLTLDGKVISFEGCAV). Cys111 and Cys203 are joined by a disulfide. A helical transmembrane segment spans residues 114-134 (QLYCFHFLASTECFLYTVMAY). The Cytoplasmic portion of the chain corresponds to 135 to 153 (DRYLAICQPLHYPVAMNRR). The helical transmembrane segment at 154 to 174 (MCAEMAGITWAIGATHAAIHT) threads the bilayer. Residues 175–211 (SLTFRLLYCGPCHIAYFFCDIPPVLKLACTDTTINEL) are Extracellular-facing. The helical transmembrane segment at 212 to 231 (VMLASIGIVAAGCLILIVIS) threads the bilayer. Residues 232-251 (YIFIVAAVLRIRTAQGRQRA) lie on the Cytoplasmic side of the membrane. The helical transmembrane segment at 252-272 (FSPCTAQLTGVLLYYVPPVCI) threads the bilayer. Residues 273–283 (YLQPRSSEAGA) are Extracellular-facing. The helical transmembrane segment at 284 to 304 (GAPAVFYTIVTPMLNPFIYTL) threads the bilayer. Over 305-331 (RNKEVKHALQRLLCSSFRESTAGSPPP) the chain is Cytoplasmic.

The protein belongs to the G-protein coupled receptor 1 family.

The protein localises to the cell membrane. Functionally, odorant receptor. This is Olfactory receptor 10S1 (OR10S1) from Homo sapiens (Human).